We begin with the raw amino-acid sequence, 156 residues long: 6,7-dimethyl-8-ribityllumazine synthase (156 aa).

Residues W28, 60-62, and 82-84 contribute to the 5-amino-6-(D-ribitylamino)uracil site; these read SFE and VVV. 87–88 provides a ligand contact to (2S)-2-hydroxy-3-oxobutyl phosphate; it reads GT. H90 acts as the Proton donor in catalysis. F115 lines the 5-amino-6-(D-ribitylamino)uracil pocket. R129 provides a ligand contact to (2S)-2-hydroxy-3-oxobutyl phosphate.

This sequence belongs to the DMRL synthase family.

The catalysed reaction is (2S)-2-hydroxy-3-oxobutyl phosphate + 5-amino-6-(D-ribitylamino)uracil = 6,7-dimethyl-8-(1-D-ribityl)lumazine + phosphate + 2 H2O + H(+). It participates in cofactor biosynthesis; riboflavin biosynthesis; riboflavin from 2-hydroxy-3-oxobutyl phosphate and 5-amino-6-(D-ribitylamino)uracil: step 1/2. Catalyzes the formation of 6,7-dimethyl-8-ribityllumazine by condensation of 5-amino-6-(D-ribitylamino)uracil with 3,4-dihydroxy-2-butanone 4-phosphate. This is the penultimate step in the biosynthesis of riboflavin. The protein is 6,7-dimethyl-8-ribityllumazine synthase of Kocuria rhizophila (strain ATCC 9341 / DSM 348 / NBRC 103217 / DC2201).